A 414-amino-acid polypeptide reads, in one-letter code: MLNTSTSGGSGVHVVLASSSSASVNGLKNYYIAKIQEKEIVLRDKIENLRRLQAQRNELNGRVRSLKEELQQLQEPGSHVGEVVKVMGKKKVLIKISQEGKYIVDIDKSIELKDLTPGVRVALRNDSYALHKILPNKIDPLVSLMKVEKVPDATYEMVGGLDEQIKEIKEVIELPIKHPELFESLGIAQPKGVIMYGPPGTGKTLLARAVAHHTDCTFIRVSGSELVQKYIGEGSKMVRELFVMAREHAPSIIFMDEIDSIGSTRTEGGKGGGDSEVQRTMLELLNQLDGFESTQNIKIIMATNRIDILDPALLRPGRIDRKIEFPNPNELARLDILKIHSRRMNLTRGINLRKIASMLGGASGAEIKATCTEAGMFALRERRVHVTQEDLEMAVAKVMKRGDESNMSFKKLFK.

197 to 204 (GPPGTGKT) serves as a coordination point for ATP.

It belongs to the AAA ATPase family.

The protein resides in the cytoplasm. Its subcellular location is the nucleus. Its function is as follows. The 26S proteasome is involved in the ATP-dependent degradation of ubiquitinated proteins. The regulatory (or ATPase) complex confers ATP dependency and substrate specificity to the 26S complex. The sequence is that of 26S proteasome regulatory subunit 8 homolog from Naegleria fowleri (Brain eating amoeba).